The sequence spans 311 residues: Ribonuclease Z (311 aa).

Zn(2+) contacts are provided by histidine 63, histidine 65, aspartate 67, histidine 68, histidine 141, aspartate 212, and histidine 270. The active-site Proton acceptor is the aspartate 67.

Belongs to the RNase Z family. In terms of assembly, homodimer. Zn(2+) is required as a cofactor.

The catalysed reaction is Endonucleolytic cleavage of RNA, removing extra 3' nucleotides from tRNA precursor, generating 3' termini of tRNAs. A 3'-hydroxy group is left at the tRNA terminus and a 5'-phosphoryl group is left at the trailer molecule.. Zinc phosphodiesterase, which displays some tRNA 3'-processing endonuclease activity. Probably involved in tRNA maturation, by removing a 3'-trailer from precursor tRNA. This is Ribonuclease Z from Lactiplantibacillus plantarum (strain ATCC BAA-793 / NCIMB 8826 / WCFS1) (Lactobacillus plantarum).